Consider the following 354-residue polypeptide: Histidinol-phosphate aminotransferase (354 aa).

Lysine 210 is modified (N6-(pyridoxal phosphate)lysine).

Belongs to the class-II pyridoxal-phosphate-dependent aminotransferase family. Histidinol-phosphate aminotransferase subfamily. Homodimer. Requires pyridoxal 5'-phosphate as cofactor.

It catalyses the reaction L-histidinol phosphate + 2-oxoglutarate = 3-(imidazol-4-yl)-2-oxopropyl phosphate + L-glutamate. It participates in amino-acid biosynthesis; L-histidine biosynthesis; L-histidine from 5-phospho-alpha-D-ribose 1-diphosphate: step 7/9. The protein is Histidinol-phosphate aminotransferase of Clostridium botulinum (strain ATCC 19397 / Type A).